The following is a 201-amino-acid chain: Ribonuclease HII (201 aa).

Residues 10–200 (LIEAGCDEAG…LGDGQLELFS (191 aa)) form the RNase H type-2 domain. 3 residues coordinate a divalent metal cation: Asp-16, Glu-17, and Asp-108.

Belongs to the RNase HII family. The cofactor is Mn(2+). Requires Mg(2+) as cofactor.

Its subcellular location is the cytoplasm. It carries out the reaction Endonucleolytic cleavage to 5'-phosphomonoester.. Its function is as follows. Endonuclease that specifically degrades the RNA of RNA-DNA hybrids. The sequence is that of Ribonuclease HII from Bacteroides fragilis (strain YCH46).